The primary structure comprises 77 residues: Immune protein Tis1 (77 aa).

Immunity protein that plays a role in preventing early activation of toxin Tas1. The sequence is that of Immune protein Tis1 (tis1) from Pseudomonas aeruginosa (strain UCBPP-PA14).